The chain runs to 309 residues: HTH-type transcriptional activator AaeR (309 aa).

One can recognise an HTH lysR-type domain in the interval 1–59 (MERLKRMSVFAKVVEFGSFTAAARQLQMSVSSISQTVSKLEDELQVKLLNRSTRSIGLT). The segment at residues 19–38 (FTAAARQLQMSVSSISQTVS) is a DNA-binding region (H-T-H motif).

This sequence belongs to the LysR transcriptional regulatory family.

With respect to regulation, activity is regulated by p-hydroxybenzoic acid. Transcriptional regulator that activates expression of the aaeXAB operon, which is involved in the efflux of aromatic carboxylic acids such as p-hydroxybenzoic acid (pHBA). In the presence of the effector pHBA, acts by binding to a single target within the aaeXAB-aaeR intergenic region. In the absence of pHBA, binds more than 50 sites along the E.coli K12 genome, including genes related to biofilm formation and several genes involved in stress response, suggesting that it might play a role in quorum sensing in the absence of pHBA. This is HTH-type transcriptional activator AaeR from Escherichia coli (strain K12).